Here is a 203-residue protein sequence, read N- to C-terminus: MTTETFVKDVKPGLKNLSVLFIVLETGRVTKTKDGHEVRTCKVADKTGSINISVWDELGNFIQPGDIIRLSKGYASLFKGCLTLYTGRGGDLQKIGEFCMVYSEVPNFSEPNPEYIAQQSQSKQGQQESGTGTNNHNSSSPAPPASDLENGNGSNSSGPPAHQSTAPAHSASGRITRSQPNHSLPGAPNSVSNGKESRRTGKR.

The segment at residues 22 to 92 is a DNA-binding region (OB); the sequence is IVLETGRVTK…TLYTGRGGDL (71 aa). Positions 110-203 are disordered; sequence EPNPEYIAQQ…GKESRRTGKR (94 aa). Residues 118-140 are compositionally biased toward low complexity; it reads QQSQSKQGQQESGTGTNNHNSSS. Polar residues predominate over residues 149-182; it reads ENGNGSNSSGPPAHQSTAPAHSASGRITRSQPNH.

The protein belongs to the SOSS-B family. SOSS-B1 subfamily. Component of the SOSS complex, composed of soss-b (soss-b1/nabp2 or soss-b2/nabp1), soss-a/ints3 and soss-c/inip. SOSS complexes containing soss-b1/nabp2 are more abundant than complexes containing soss-b2/nabp1.

The protein resides in the nucleus. Component of the SOSS complex, a multiprotein complex that functions downstream of the MRN complex to promote DNA repair and G2/M checkpoint. In the SOSS complex, acts as a sensor of single-stranded DNA that binds to single-stranded DNA. The SOSS complex associates with DNA lesions and influences diverse endpoints in the cellular DNA damage response including cell-cycle checkpoint activation, recombinational repair and maintenance of genomic stability. Required for efficient homologous recombination-dependent repair of double-strand breaks (DSBs). The chain is SOSS complex subunit B1-A (nabp2-a) from Xenopus laevis (African clawed frog).